A 644-amino-acid chain; its full sequence is SPbeta prophage-derived uncharacterized protein YomE (644 aa).

The protein is SPbeta prophage-derived uncharacterized protein YomE (yomE) of Bacillus subtilis (strain 168).